We begin with the raw amino-acid sequence, 87 residues long: Elastase inhibitor AFLEI (87 aa).

Positions Met1–Ala19 are cleaved as a signal peptide. The cysteines at positions 24 and 86 are disulfide-linked.

The protein localises to the secreted. Functionally, elastase inhibitor. This Aspergillus fumigatus (strain CBS 144.89 / FGSC A1163 / CEA10) (Neosartorya fumigata) protein is Elastase inhibitor AFLEI.